A 340-amino-acid polypeptide reads, in one-letter code: Glyceraldehyde-3-phosphate dehydrogenase (340 aa).

NAD(+) contacts are provided by residues 11–12 and glycine 109; that span reads TI. 138-140 lines the D-glyceraldehyde 3-phosphate pocket; sequence SCN. Catalysis depends on cysteine 139, which acts as the Nucleophile. Arginine 167 is an NAD(+) binding site. A D-glyceraldehyde 3-phosphate-binding site is contributed by 193–194; that stretch reads HA. An NAD(+)-binding site is contributed by glutamine 300.

It belongs to the glyceraldehyde-3-phosphate dehydrogenase family. In terms of assembly, homotetramer.

Its subcellular location is the cytoplasm. It carries out the reaction D-glyceraldehyde 3-phosphate + phosphate + NADP(+) = (2R)-3-phospho-glyceroyl phosphate + NADPH + H(+). The catalysed reaction is D-glyceraldehyde 3-phosphate + phosphate + NAD(+) = (2R)-3-phospho-glyceroyl phosphate + NADH + H(+). It functions in the pathway carbohydrate degradation; glycolysis; pyruvate from D-glyceraldehyde 3-phosphate: step 1/5. The sequence is that of Glyceraldehyde-3-phosphate dehydrogenase from Metallosphaera sedula (strain ATCC 51363 / DSM 5348 / JCM 9185 / NBRC 15509 / TH2).